The chain runs to 240 residues: Biosynthetic peptidoglycan transglycosylase (240 aa).

A helical transmembrane segment spans residues 9-31; sequence FLNVVKWFAIASVLLVLLFRVVP.

This sequence belongs to the glycosyltransferase 51 family.

It is found in the cell inner membrane. It carries out the reaction [GlcNAc-(1-&gt;4)-Mur2Ac(oyl-L-Ala-gamma-D-Glu-L-Lys-D-Ala-D-Ala)](n)-di-trans,octa-cis-undecaprenyl diphosphate + beta-D-GlcNAc-(1-&gt;4)-Mur2Ac(oyl-L-Ala-gamma-D-Glu-L-Lys-D-Ala-D-Ala)-di-trans,octa-cis-undecaprenyl diphosphate = [GlcNAc-(1-&gt;4)-Mur2Ac(oyl-L-Ala-gamma-D-Glu-L-Lys-D-Ala-D-Ala)](n+1)-di-trans,octa-cis-undecaprenyl diphosphate + di-trans,octa-cis-undecaprenyl diphosphate + H(+). The protein operates within cell wall biogenesis; peptidoglycan biosynthesis. Functionally, peptidoglycan polymerase that catalyzes glycan chain elongation from lipid-linked precursors. This is Biosynthetic peptidoglycan transglycosylase from Pseudomonas fluorescens (strain SBW25).